A 345-amino-acid polypeptide reads, in one-letter code: Phenylalanine--tRNA ligase alpha subunit (345 aa).

Glu259 is a binding site for Mg(2+).

Belongs to the class-II aminoacyl-tRNA synthetase family. Phe-tRNA synthetase alpha subunit type 1 subfamily. In terms of assembly, tetramer of two alpha and two beta subunits. The cofactor is Mg(2+).

It localises to the cytoplasm. The catalysed reaction is tRNA(Phe) + L-phenylalanine + ATP = L-phenylalanyl-tRNA(Phe) + AMP + diphosphate + H(+). This chain is Phenylalanine--tRNA ligase alpha subunit, found in Lactococcus lactis subsp. cremoris (strain MG1363).